We begin with the raw amino-acid sequence, 338 residues long: Outer membrane transporter protein TsaT (338 aa).

The N-terminal stretch at 1–22 (MNFRRRLCTAALIAALPLASQA) is a signal peptide.

Part of a two-component transport system composed of TsaT and TsaS.

Its subcellular location is the cell outer membrane. Functionally, involved in the uptake of p-toluenesulphonate (TSA). Forms a large, general diffusion pore with a preference for anions. In Comamonas testosteroni (Pseudomonas testosteroni), this protein is Outer membrane transporter protein TsaT (tsaT).